A 102-amino-acid chain; its full sequence is NADH-quinone oxidoreductase subunit K (102 aa).

The next 3 helical transmembrane spans lie at 6–26 (LGQGLLLAAILFALGLVGVLV), 30–50 (LLFMLMSLEVMLNAAGVAFIV), and 64–84 (FILVLTLAAAEVSVGLALILL).

It belongs to the complex I subunit 4L family. As to quaternary structure, NDH-1 is composed of 14 different subunits. Subunits NuoA, H, J, K, L, M, N constitute the membrane sector of the complex.

Its subcellular location is the cell inner membrane. It catalyses the reaction a quinone + NADH + 5 H(+)(in) = a quinol + NAD(+) + 4 H(+)(out). Its function is as follows. NDH-1 shuttles electrons from NADH, via FMN and iron-sulfur (Fe-S) centers, to quinones in the respiratory chain. The immediate electron acceptor for the enzyme in this species is believed to be ubiquinone. Couples the redox reaction to proton translocation (for every two electrons transferred, four hydrogen ions are translocated across the cytoplasmic membrane), and thus conserves the redox energy in a proton gradient. This Acidiphilium cryptum (strain JF-5) protein is NADH-quinone oxidoreductase subunit K.